A 689-amino-acid chain; its full sequence is Glycine--tRNA ligase beta subunit (689 aa).

Belongs to the class-II aminoacyl-tRNA synthetase family. In terms of assembly, tetramer of two alpha and two beta subunits.

It localises to the cytoplasm. The enzyme catalyses tRNA(Gly) + glycine + ATP = glycyl-tRNA(Gly) + AMP + diphosphate. This Coxiella burnetii (strain RSA 331 / Henzerling II) protein is Glycine--tRNA ligase beta subunit.